Here is a 361-residue protein sequence, read N- to C-terminus: Chorismate synthase (361 aa).

Residues Arg48 and Arg54 each contribute to the NADP(+) site. Residues 125-127, 238-239, Gly278, 293-297, and Arg319 each bind FMN; these read RSS, NA, and KPTSS.

Belongs to the chorismate synthase family. In terms of assembly, homotetramer. Requires FMNH2 as cofactor.

The catalysed reaction is 5-O-(1-carboxyvinyl)-3-phosphoshikimate = chorismate + phosphate. Its pathway is metabolic intermediate biosynthesis; chorismate biosynthesis; chorismate from D-erythrose 4-phosphate and phosphoenolpyruvate: step 7/7. Functionally, catalyzes the anti-1,4-elimination of the C-3 phosphate and the C-6 proR hydrogen from 5-enolpyruvylshikimate-3-phosphate (EPSP) to yield chorismate, which is the branch point compound that serves as the starting substrate for the three terminal pathways of aromatic amino acid biosynthesis. This reaction introduces a second double bond into the aromatic ring system. This chain is Chorismate synthase, found in Photorhabdus laumondii subsp. laumondii (strain DSM 15139 / CIP 105565 / TT01) (Photorhabdus luminescens subsp. laumondii).